The sequence spans 130 residues: Small ribosomal subunit protein uS8 (130 aa).

This sequence belongs to the universal ribosomal protein uS8 family. As to quaternary structure, part of the 30S ribosomal subunit.

In terms of biological role, one of the primary rRNA binding proteins, it binds directly to 16S rRNA central domain where it helps coordinate assembly of the platform of the 30S subunit. In Methanococcus vannielii (strain ATCC 35089 / DSM 1224 / JCM 13029 / OCM 148 / SB), this protein is Small ribosomal subunit protein uS8.